The chain runs to 460 residues: N-myc proto-oncogene protein (460 aa).

The segment at 19–47 (LEFDSLQPCFYPDEDDFYFGGPDSTPPGE) is interaction with AURKA. The segment at 61–90 (LSPSRAFSEQSPEPSDWATEMLLPEADLWG) is interaction with AURKA and FBXW7. Positions 76–85 (DWATEMLLPE) match the 9aaTAD motif. 3 disordered regions span residues 131–169 (VSEK…GAGR), 221–288 (AAAP…SNSK), and 330–388 (APSP…LERQ). Low complexity predominate over residues 138-158 (GRGPPAAGPATPGAGAANPAG). Gly residues predominate over residues 159-169 (RGHGGTAGAGR). A compositionally biased stretch (low complexity) spans 221 to 233 (AAAPASAAVAAPP). The segment covering 255-274 (TLSDSDDEDDEEEDEEEEID) has biased composition (acidic residues). A phosphoserine; by CK2 mark is found at Ser257 and Ser259. In terms of domain architecture, bHLH spans 377–429 (ERRRNHNILERQRRNDLRSSFLTLRDHVPELVKNEKAAKVVILKKATEYVHSL). The leucine-zipper stretch occupies residues 429 to 450 (LQAEEHQLLLEKEKLQARQQQL).

Efficient DNA binding requires dimerization with another bHLH protein. Binds DNA as a heterodimer with MAX. Interacts with KDM5A, KDM5B and HUWE1. Interacts with MYCNOS. Interacts with AURKA; interaction is phospho-independent and triggers AURKA activation; AURKA competes with FBXW7 for binding to unphosphorylated MYCN but not for binding to unphosphorylated MYCN. Interacts with FBXW7; FBXW7 competes with AURKA for binding to unphosphorylated MYCN but not for binding to phosphorylated MYCN. In terms of processing, phosphorylated by GSK3-beta which may promote its degradation. Phosphorylated by AURKA.

It is found in the nucleus. Positively regulates the transcription of MYCNOS in neuroblastoma cells. This chain is N-myc proto-oncogene protein (MYCN), found in Marmota monax (Woodchuck).